Consider the following 153-residue polypeptide: Flagellar assembly factor FliW (153 aa).

This sequence belongs to the FliW family. In terms of assembly, interacts with translational regulator CsrA and flagellin(s).

The protein localises to the cytoplasm. In terms of biological role, acts as an anti-CsrA protein, binds CsrA and prevents it from repressing translation of its target genes, one of which is flagellin. Binds to flagellin and participates in the assembly of the flagellum. This Leptospira biflexa serovar Patoc (strain Patoc 1 / Ames) protein is Flagellar assembly factor FliW.